We begin with the raw amino-acid sequence, 274 residues long: Large ribosomal subunit protein uL2c (274 aa).

The segment at 224–274 (NPVDHPHGGGEGRAPIGRKKPTTPWGYPALGRKSRKRNKYSEKFILRHRSK) is disordered.

The protein belongs to the universal ribosomal protein uL2 family. As to quaternary structure, part of the 50S ribosomal subunit.

The protein resides in the plastid. It localises to the chloroplast. This is Large ribosomal subunit protein uL2c (rpl2) from Ipomoea purpurea (Common morning glory).